The primary structure comprises 450 residues: Glucose-6-phosphate isomerase (450 aa).

Position 39 is a phosphothreonine (threonine 39). The active-site Proton donor is glutamate 291. Catalysis depends on residues histidine 312 and lysine 426.

The protein belongs to the GPI family.

Its subcellular location is the cytoplasm. It carries out the reaction alpha-D-glucose 6-phosphate = beta-D-fructose 6-phosphate. It participates in carbohydrate biosynthesis; gluconeogenesis. Its pathway is carbohydrate degradation; glycolysis; D-glyceraldehyde 3-phosphate and glycerone phosphate from D-glucose: step 2/4. Functionally, catalyzes the reversible isomerization of glucose-6-phosphate to fructose-6-phosphate. This Bacillus anthracis protein is Glucose-6-phosphate isomerase.